An 85-amino-acid polypeptide reads, in one-letter code: Cell division topological specificity factor (85 aa).

Belongs to the MinE family.

Prevents the cell division inhibition by proteins MinC and MinD at internal division sites while permitting inhibition at polar sites. This ensures cell division at the proper site by restricting the formation of a division septum at the midpoint of the long axis of the cell. In Xylella fastidiosa (strain M23), this protein is Cell division topological specificity factor.